The primary structure comprises 83 residues: Cytochrome b559 subunit alpha (83 aa).

A helical membrane pass occupies residues 21-35 (VIHSITIPSLFIAGW). Position 23 (histidine 23) interacts with heme.

It belongs to the PsbE/PsbF family. In terms of assembly, heterodimer of an alpha subunit and a beta subunit. PSII is composed of 1 copy each of membrane proteins PsbA, PsbB, PsbC, PsbD, PsbE, PsbF, PsbH, PsbI, PsbJ, PsbK, PsbL, PsbM, PsbT, PsbX, PsbY, PsbZ, Psb30/Ycf12, at least 3 peripheral proteins of the oxygen-evolving complex and a large number of cofactors. It forms dimeric complexes. The cofactor is heme b.

It is found in the plastid. The protein localises to the chloroplast thylakoid membrane. In terms of biological role, this b-type cytochrome is tightly associated with the reaction center of photosystem II (PSII). PSII is a light-driven water:plastoquinone oxidoreductase that uses light energy to abstract electrons from H(2)O, generating O(2) and a proton gradient subsequently used for ATP formation. It consists of a core antenna complex that captures photons, and an electron transfer chain that converts photonic excitation into a charge separation. The polypeptide is Cytochrome b559 subunit alpha (Panax ginseng (Korean ginseng)).